Here is a 224-residue protein sequence, read N- to C-terminus: Orotate phosphoribosyltransferase (224 aa).

5-phospho-alpha-D-ribose 1-diphosphate contacts are provided by residues lysine 26, tyrosine 73 to lysine 74, arginine 100, lysine 101, lysine 104, histidine 106, and glutamate 127 to serine 135. Orotate is bound by residues threonine 131 and arginine 160.

The protein belongs to the purine/pyrimidine phosphoribosyltransferase family. PyrE subfamily. Homodimer. Mg(2+) serves as cofactor.

The enzyme catalyses orotidine 5'-phosphate + diphosphate = orotate + 5-phospho-alpha-D-ribose 1-diphosphate. The protein operates within pyrimidine metabolism; UMP biosynthesis via de novo pathway; UMP from orotate: step 1/2. Its function is as follows. Catalyzes the transfer of a ribosyl phosphate group from 5-phosphoribose 1-diphosphate to orotate, leading to the formation of orotidine monophosphate (OMP). In Clostridium botulinum (strain Alaska E43 / Type E3), this protein is Orotate phosphoribosyltransferase.